A 120-amino-acid polypeptide reads, in one-letter code: Glycine cleavage system H protein (120 aa).

The Lipoyl-binding domain maps to 17–99; sequence IATVGITSHA…QGAGWFFKLK (83 aa). K58 carries the post-translational modification N6-lipoyllysine.

This sequence belongs to the GcvH family. The glycine cleavage system is composed of four proteins: P, T, L and H. (R)-lipoate serves as cofactor.

The glycine cleavage system catalyzes the degradation of glycine. The H protein shuttles the methylamine group of glycine from the P protein to the T protein. This Agrobacterium fabrum (strain C58 / ATCC 33970) (Agrobacterium tumefaciens (strain C58)) protein is Glycine cleavage system H protein.